The chain runs to 500 residues: Lysine--tRNA ligase (500 aa).

Residues Glu-410 and Glu-417 each contribute to the Mg(2+) site.

Belongs to the class-II aminoacyl-tRNA synthetase family. As to quaternary structure, homodimer. The cofactor is Mg(2+).

It is found in the cytoplasm. The enzyme catalyses tRNA(Lys) + L-lysine + ATP = L-lysyl-tRNA(Lys) + AMP + diphosphate. This chain is Lysine--tRNA ligase, found in Pseudomonas entomophila (strain L48).